A 111-amino-acid chain; its full sequence is Large ribosomal subunit protein uL22 (111 aa).

Belongs to the universal ribosomal protein uL22 family. Part of the 50S ribosomal subunit.

In terms of biological role, this protein binds specifically to 23S rRNA; its binding is stimulated by other ribosomal proteins, e.g. L4, L17, and L20. It is important during the early stages of 50S assembly. It makes multiple contacts with different domains of the 23S rRNA in the assembled 50S subunit and ribosome. The globular domain of the protein is located near the polypeptide exit tunnel on the outside of the subunit, while an extended beta-hairpin is found that lines the wall of the exit tunnel in the center of the 70S ribosome. The sequence is that of Large ribosomal subunit protein uL22 from Polynucleobacter necessarius subsp. necessarius (strain STIR1).